The following is a 432-amino-acid chain: Adenylosuccinate synthetase (432 aa).

GTP is bound by residues 13-19 (GDEGKGK) and 41-43 (GHT). Residue D14 is the Proton acceptor of the active site. Residues D14 and G41 each contribute to the Mg(2+) site. Residues 14-17 (DEGK), 39-42 (NAGH), T130, R144, Q225, T240, and R304 contribute to the IMP site. H42 serves as the catalytic Proton donor. Substrate is bound at residue 300 to 306 (AVTGRPR). Residues R306, 332-334 (KLD), and 415-417 (STG) contribute to the GTP site.

Belongs to the adenylosuccinate synthetase family. Homodimer. The cofactor is Mg(2+).

It localises to the cytoplasm. The enzyme catalyses IMP + L-aspartate + GTP = N(6)-(1,2-dicarboxyethyl)-AMP + GDP + phosphate + 2 H(+). It functions in the pathway purine metabolism; AMP biosynthesis via de novo pathway; AMP from IMP: step 1/2. Its function is as follows. Plays an important role in the de novo pathway of purine nucleotide biosynthesis. Catalyzes the first committed step in the biosynthesis of AMP from IMP. The sequence is that of Adenylosuccinate synthetase from Glaesserella parasuis serovar 5 (strain SH0165) (Haemophilus parasuis).